The following is a 278-amino-acid chain: Sulfur carrier protein FdhD (278 aa).

Cysteine 121 acts as the Cysteine persulfide intermediate in catalysis. 260–265 is a Mo-bis(molybdopterin guanine dinucleotide) binding site; sequence FCKPGR.

The protein belongs to the FdhD family.

Its subcellular location is the cytoplasm. In terms of biological role, required for formate dehydrogenase (FDH) activity. Acts as a sulfur carrier protein that transfers sulfur from IscS to the molybdenum cofactor prior to its insertion into FDH. This Salmonella heidelberg (strain SL476) protein is Sulfur carrier protein FdhD.